The sequence spans 122 residues: Large ribosomal subunit protein uL14 (122 aa).

The protein belongs to the universal ribosomal protein uL14 family. In terms of assembly, part of the 50S ribosomal subunit. Forms a cluster with proteins L3 and L19. In the 70S ribosome, L14 and L19 interact and together make contacts with the 16S rRNA in bridges B5 and B8.

Its function is as follows. Binds to 23S rRNA. Forms part of two intersubunit bridges in the 70S ribosome. In Thermosynechococcus vestitus (strain NIES-2133 / IAM M-273 / BP-1), this protein is Large ribosomal subunit protein uL14.